A 151-amino-acid polypeptide reads, in one-letter code: MADSERLSAPGCWLACTSFSRTKKGILLFAEIILCLVILICFSASTSAYSSLSVIEMIFAAVLFVFYMCDLHSKISFINWPWTDFFRSLIAAILYLITSIVVLVEGRGSSKIVAGVLGLLATLLFGYDAYITFPLKQQRHTAAPTDPTDGP.

The MARVEL domain maps to 19 to 137 (FSRTKKGILL…DAYITFPLKQ (119 aa)). The next 4 membrane-spanning stretches (helical) occupy residues 25–45 (GILLFAEIILCLVILICFSAS), 48–68 (AYSSLSVIEMIFAAVLFVFYM), 85–105 (FFRSLIAAILYLITSIVVLVE), and 112–132 (IVAGVLGLLATLLFGYDAYIT).

The protein localises to the membrane. May play a role in cell differentiation in the intestinal epithelium. This is Proteolipid protein 2 (Plp2) from Rattus norvegicus (Rat).